A 399-amino-acid chain; its full sequence is 1-deoxy-D-xylulose 5-phosphate reductoisomerase (399 aa).

NADPH is bound by residues Thr-13, Gly-14, Ser-15, Ile-16, and Asn-127. Lys-128 is a 1-deoxy-D-xylulose 5-phosphate binding site. Glu-129 is an NADPH binding site. Asp-153 lines the Mn(2+) pocket. The 1-deoxy-D-xylulose 5-phosphate site is built by Ser-154, Glu-155, Ser-187, and His-210. Position 155 (Glu-155) interacts with Mn(2+). An NADPH-binding site is contributed by Gly-216. 1-deoxy-D-xylulose 5-phosphate-binding residues include Ser-223, Asn-228, Lys-229, and Glu-232. A Mn(2+)-binding site is contributed by Glu-232.

Belongs to the DXR family. The cofactor is Mg(2+). Requires Mn(2+) as cofactor.

The catalysed reaction is 2-C-methyl-D-erythritol 4-phosphate + NADP(+) = 1-deoxy-D-xylulose 5-phosphate + NADPH + H(+). It functions in the pathway isoprenoid biosynthesis; isopentenyl diphosphate biosynthesis via DXP pathway; isopentenyl diphosphate from 1-deoxy-D-xylulose 5-phosphate: step 1/6. In terms of biological role, catalyzes the NADPH-dependent rearrangement and reduction of 1-deoxy-D-xylulose-5-phosphate (DXP) to 2-C-methyl-D-erythritol 4-phosphate (MEP). This Bordetella avium (strain 197N) protein is 1-deoxy-D-xylulose 5-phosphate reductoisomerase.